Here is a 384-residue protein sequence, read N- to C-terminus: Galactokinase (384 aa).

34–37 (EHTD) contacts substrate. 123 to 129 (SSGLSSS) provides a ligand contact to ATP. Mg(2+)-binding residues include serine 129 and glutamate 161. Aspartate 173 (proton acceptor) is an active-site residue. Position 222 (tyrosine 222) interacts with substrate.

Belongs to the GHMP kinase family. GalK subfamily.

The protein localises to the cytoplasm. It catalyses the reaction alpha-D-galactose + ATP = alpha-D-galactose 1-phosphate + ADP + H(+). It functions in the pathway carbohydrate metabolism; galactose metabolism. Catalyzes the transfer of the gamma-phosphate of ATP to D-galactose to form alpha-D-galactose-1-phosphate (Gal-1-P). In Haemophilus influenzae (strain PittEE), this protein is Galactokinase.